We begin with the raw amino-acid sequence, 98 residues long: C-X-C motif chemokine 10 (98 aa).

A signal peptide spans 1 to 21; the sequence is MNQTAILICCLVFLTLSGIQG. Position 26 is a citrulline (arginine 26). Intrachain disulfides connect cysteine 30/cysteine 57 and cysteine 32/cysteine 74.

The protein belongs to the intercrine alpha (chemokine CxC) family.

It is found in the secreted. Functionally, chemotactic for monocytes and T-lymphocytes. Binds to CXCR3. In Macaca nemestrina (Pig-tailed macaque), this protein is C-X-C motif chemokine 10 (CXCL10).